The sequence spans 817 residues: Protein Jade-3 (817 aa).

The interval 1-38 (MKRLRNLSSSDSSDNESPSTSFSSCFQHKGKGKCTADD) is disordered. The span at 8-24 (SSSDSSDNESPSTSFSS) shows a compositional bias: low complexity. The PHD-type 1 zinc finger occupies 202–252 (DVICDVCRSPDSEEGNDMVFCDRCNICVHQACYGILKVPEGSWLCRTCVLG). The segment at 254–288 (HPQCILCPKTGGAMKATRTGTKWAHVSCALWIPEV) adopts a C2HC pre-PHD-type zinc-finger fold. A PHD-type 2 zinc finger spans residues 312–368 (LVCSLCKLKTGACIQCSVKSCITAFHVTCAFEHSLEMKTILDEGDEVKFKSYCLKHS). 3 disordered regions span residues 375–396 (ISEQ…SERT), 665–689 (NGVL…QNSE), and 719–817 (LVRT…SVQR). Basic and acidic residues predominate over residues 379–396 (EEPHKTHSDNRPTESERT). Positions 667 to 689 (VLSSGDRTQRDSSSQTSPGQNSE) are enriched in polar residues. The span at 722–743 (TTEDLRSSEKPQRRQSVKERLW) shows a compositional bias: basic and acidic residues. The span at 747-758 (PADTQTSGTPYQ) shows a compositional bias: polar residues. Residues 777-799 (DENKDHMLLRRNSRESPNRDSCR) are compositionally biased toward basic and acidic residues. Residues 801 to 810 (SRIRGKRKMT) are compositionally biased toward basic residues.

The protein belongs to the JADE family. As to quaternary structure, component of the HBO1 complex.

Scaffold subunit of some HBO1 complexes, which have a histone H4 acetyltransferase activity. The polypeptide is Protein Jade-3 (jade3) (Xenopus tropicalis (Western clawed frog)).